A 332-amino-acid chain; its full sequence is 3-ketodihydrosphingosine reductase (332 aa).

The first 25 residues, 1-25 (MLLLAAAGLVAFVLLLYMVSPLISP), serve as a signal peptide directing secretion. At 26-270 (KPLALPGAHV…GNFNSSIGSD (245 aa)) the chain is on the cytoplasmic side. Residues Gly39, Ser41, Ser42, Gly43, Arg64, Lys68, and Asp93 each contribute to the NADPH site. The GXSXG motif lies at 39-43 (GGSSG). The Proton donor role is filled by Ser172. Tyr186 acts as the Proton acceptor in catalysis. NADP(+)-binding residues include Tyr186 and Lys190. The active-site Lowers pKa of active site Tyr is Lys190. A helical membrane pass occupies residues 271–291 (GYMLSSLTCGMAPVTSITEGL). Over 292–293 (QQ) the chain is Lumenal. A helical transmembrane segment spans residues 294 to 314 (VVTMGLFRTIALFYLGSFDNI). Residues 315–332 (VRRCMVQKAKPEVVDKTA) lie on the Cytoplasmic side of the membrane.

This sequence belongs to the short-chain dehydrogenases/reductases (SDR) family.

The protein localises to the endoplasmic reticulum membrane. The catalysed reaction is sphinganine + NADP(+) = 3-oxosphinganine + NADPH + H(+). It participates in lipid metabolism; sphingolipid metabolism. Its function is as follows. Catalyzes the reduction of 3'-oxosphinganine (3-ketodihydrosphingosine/KDS) to sphinganine (dihydrosphingosine/DHS), the second step of de novo sphingolipid biosynthesis. This chain is 3-ketodihydrosphingosine reductase (Kdsr), found in Mus musculus (Mouse).